The chain runs to 363 residues: 1,2-Dihydrovomilenine reductase (363 aa).

The Enoyl reductase (ER) domain occupies 24-352; it reads GILSPFKFSR…KGDVRYRFVI (329 aa). A Zn(2+)-binding site is contributed by Cys-51. NADP(+) is bound at residue Ser-53. Zn(2+) is bound by residues Asp-54, Glu-74, Cys-104, Cys-107, Cys-110, and Cys-118. NADP(+) is bound by residues Leu-193, Gly-195, Leu-196, Ser-215, Thr-216, Ser-217, Lys-220, Lys-221, Val-278, Ala-280, Thr-302, and Arg-349.

It belongs to the zinc-containing alcohol dehydrogenase family. Class-P subfamily. As to quaternary structure, homodimer. Zn(2+) is required as a cofactor. In terms of tissue distribution, mainly expressed in mature roots and, to a lower extent, in stems and leaves.

It is found in the cytoplasm. The catalysed reaction is 17-O-acetylnorajmaline + NADP(+) = (2R)-1,2-dihydrovomilenine + NADPH + 2 H(+). The enzyme catalyses (20S)-19,20-dihydrovomilenine + NADP(+) = vomilenine + NADPH + H(+). Its pathway is alkaloid biosynthesis; ajmaline biosynthesis. Alcohol dehydrogenase involved in the biosynthesis of ajmaline-type monoterpenoid indole alkaloids (MIAs) natural products, important plant-derived pharmaceuticals used in the therapy of heart disorders. Catalyzes the conversion of 1,2-dihydrovomilenine to 17-O-acetylnorajmaline, an intermediate chemical in the biosynthesis of ajmaline. Also able, with a lower efficiency, to convert vomilenine into 19,20-dihydrovomilenine. The sequence is that of 1,2-Dihydrovomilenine reductase from Rauvolfia serpentina (Serpentine wood).